A 96-amino-acid chain; its full sequence is MSATKKYEMMILLTEEFNDSELKTWAFNYAKALRKLSASEISVISRGKRDLSYYINNQKKGNFIQINFSSMPKYVDNFSKNLKFDSNVLRFLILNK.

Belongs to the bacterial ribosomal protein bS6 family.

It is found in the plastid. The protein localises to the chloroplast. In terms of biological role, binds together with bS18 to 16S ribosomal RNA. In Trieres chinensis (Marine centric diatom), this protein is Small ribosomal subunit protein bS6c (rps6).